A 207-amino-acid chain; its full sequence is Homeobox protein BarH-like 1 (207 aa).

The homeobox DNA-binding region spans 95-154 (GRRSRTVFTELQLMGLEKRFEKQKYLSTPDRIDLAESLGLSQLQVKTWYQNRRMKWKKIV). The segment at 157–207 (GGGLESPTKPKGRPKKNSIPSSEQLSEQERAKETEKPPESPGEPSERQQEE) is disordered. The segment covering 183–207 (EQERAKETEKPPESPGEPSERQQEE) has biased composition (basic and acidic residues).

It belongs to the BAR homeobox family. As to expression, expressed predominantly in the facial primordia, developing stomach, and proximal limbs.

The protein localises to the nucleus. Functionally, transcription factor, which is involved in craniofacial development, in odontogenic region definition, and in stomach organogenesis. Binds to a regulatory module of the NCAM promoter. The polypeptide is Homeobox protein BarH-like 1 (BARX1) (Gallus gallus (Chicken)).